The sequence spans 141 residues: Hemoglobin subunit alpha-1/2 (141 aa).

The 141-residue stretch at 1–141 folds into the Globin domain; the sequence is VLSPADKTNV…VSTVLTSKYR (141 aa). Position 3 is a phosphoserine (S3). N6-succinyllysine is present on K7. T8 bears the Phosphothreonine mark. Residue K11 is modified to N6-succinyllysine. Residue K16 is modified to N6-acetyllysine; alternate. N6-succinyllysine; alternate is present on K16. At Y24 the chain carries Phosphotyrosine. S35 carries the post-translational modification Phosphoserine. N6-succinyllysine is present on K40. S49 bears the Phosphoserine mark. H58 serves as a coordination point for O2. H87 contributes to the heme b binding site. Phosphoserine is present on S102. T108 bears the Phosphothreonine mark. Residues S124 and S131 each carry the phosphoserine modification. 2 positions are modified to phosphothreonine: T134 and T137. A Phosphoserine modification is found at S138.

This sequence belongs to the globin family. Heterotetramer of two alpha chains and two beta chains. Red blood cells.

Functionally, involved in oxygen transport from the lung to the various peripheral tissues. In Macaca speciosa (Stump-tail macaque), this protein is Hemoglobin subunit alpha-1/2.